Here is a 422-residue protein sequence, read N- to C-terminus: UDP-N-acetylglucosamine 1-carboxyvinyltransferase (422 aa).

Residue lysine 22–asparagine 23 coordinates phosphoenolpyruvate. Arginine 92 lines the UDP-N-acetyl-alpha-D-glucosamine pocket. The Proton donor role is filled by cysteine 116. Position 116 is a 2-(S-cysteinyl)pyruvic acid O-phosphothioketal (cysteine 116). UDP-N-acetyl-alpha-D-glucosamine is bound by residues arginine 121 to leucine 125, aspartate 307, and leucine 329.

The protein belongs to the EPSP synthase family. MurA subfamily.

It localises to the cytoplasm. It catalyses the reaction phosphoenolpyruvate + UDP-N-acetyl-alpha-D-glucosamine = UDP-N-acetyl-3-O-(1-carboxyvinyl)-alpha-D-glucosamine + phosphate. It functions in the pathway cell wall biogenesis; peptidoglycan biosynthesis. In terms of biological role, cell wall formation. Adds enolpyruvyl to UDP-N-acetylglucosamine. This chain is UDP-N-acetylglucosamine 1-carboxyvinyltransferase, found in Aliarcobacter butzleri (strain RM4018) (Arcobacter butzleri).